We begin with the raw amino-acid sequence, 85 residues long: Depressant scorpion toxin BmKIM (85 aa).

An N-terminal signal peptide occupies residues 1–21 (MKLFLLLVFFASMLIDGLVNA). One can recognise an LCN-type CS-alpha/beta domain in the interval 22–82 (DGYIRGSNGC…TWKSESNTCG (61 aa)). Disulfide bonds link C31–C81, C35–C56, C42–C63, and C46–C65. Residue G82 is modified to Glycine amide.

This sequence belongs to the long (4 C-C) scorpion toxin superfamily. Sodium channel inhibitor family. As to expression, expressed by the venom gland.

It localises to the secreted. Its function is as follows. Causes a slow progressive depressant flaccid paralysis, when injected into S.falculata blowfly larvae. Inhibits dose-dependently the total sodium (Nav) currents both in dorsal root ganglia neurons and in ventricular myocytes. Is toxic to mice by intravenous injection, but not by subcutaneous or intracerebroventricular injection. Produces antiarrhythmia in rat. Is then active on both mammals and insects. The protein is Depressant scorpion toxin BmKIM (KIM2) of Olivierus martensii (Manchurian scorpion).